A 429-amino-acid chain; its full sequence is MSSVVVVGTQWGDEGKGKITDFLSEHAEVVARYQGGNNAGHTIVFGGVKYKLHLIPSGIFYKEKICVIGNGLVVDPKALLEELKYLHDRGVSTDNLRVSNRAHVILPYHLKQDELEEASKGDNKIGTTKKGIGPAYMDKAARIGIRMADLLDREAFKEKLERNLAQKNRLFEKMYDTEGFSVEEIFEEYFEYGQQIAQYVCDTSVVLNDALDNNHRVLFEGAQGVMLDIDHGTYPFVTSSNPIAGGVTVGTGVGPAKVTRVVGVCKAYTSRVGDGPFPTELHDEIGHQIREVGREYGTTTGRPRRVGWFDSVVVRHARRVSGLTDLSLNSIDVLTGISTLKICVAYKYNGEVIDEVPANLNILAKCEPVYEELPGWTEDITGVRSLDELPENARKYVERVSELTGIQLSMFSVGPDRNQTNIVRNVYEA.

GTP-binding positions include 12 to 18 (GDEGKGK) and 40 to 42 (GHT). Asp13 serves as the catalytic Proton acceptor. Mg(2+) is bound by residues Asp13 and Gly40. IMP-binding positions include 13 to 16 (DEGK), 38 to 41 (NAGH), Thr128, Arg142, Gln223, Thr238, and Arg302. The active-site Proton donor is His41. Residue 298 to 304 (TTTGRPR) coordinates substrate. GTP is bound by residues Arg304, 330-332 (SID), and 412-414 (SVG).

This sequence belongs to the adenylosuccinate synthetase family. Homodimer. Mg(2+) is required as a cofactor.

It is found in the cytoplasm. The catalysed reaction is IMP + L-aspartate + GTP = N(6)-(1,2-dicarboxyethyl)-AMP + GDP + phosphate + 2 H(+). Its pathway is purine metabolism; AMP biosynthesis via de novo pathway; AMP from IMP: step 1/2. Functionally, plays an important role in the de novo pathway of purine nucleotide biosynthesis. Catalyzes the first committed step in the biosynthesis of AMP from IMP. The protein is Adenylosuccinate synthetase of Bacillus cereus (strain ATCC 10987 / NRS 248).